The chain runs to 335 residues: MLP-like protein 28 (335 aa).

It belongs to the MLP family.

Can bind steroids (in vitro), and may also bind other types of hydrophobic ligands. The protein is MLP-like protein 28 (MLP28) of Arabidopsis thaliana (Mouse-ear cress).